The chain runs to 200 residues: Snake venom metalloproteinase BmooMP-I (200 aa).

The 196-residue stretch at 5-200 folds into the Peptidase M12B domain; sequence RYIELAVVAD…HNPQCILNEP (196 aa). Residues Glu-8 and Asp-92 each contribute to the Ca(2+) site. 3 disulfides stabilise this stretch: Cys-116/Cys-195, Cys-155/Cys-179, and Cys-157/Cys-162. Zn(2+) is bound at residue His-141. The active site involves Glu-142. 2 residues coordinate Zn(2+): His-145 and His-151. Ca(2+)-binding residues include Cys-195 and Asn-198.

This sequence belongs to the venom metalloproteinase (M12B) family. P-I subfamily. In terms of assembly, monomer. Zn(2+) is required as a cofactor. As to expression, expressed by the venom gland.

Its subcellular location is the secreted. Zinc metalloprotease that displays fibrinogenolytic, gelatinase and weak hemorrhagic activities. Degrades the three chain of fibrinogen Aalpha-chain (FGA), Bbeta-chain (FGB), and gamma (FGG). This is Snake venom metalloproteinase BmooMP-I from Bothrops moojeni (Lance-headed viper).